Here is a 503-residue protein sequence, read N- to C-terminus: Maturase K (503 aa).

The protein belongs to the intron maturase 2 family. MatK subfamily.

The protein localises to the plastid. The protein resides in the chloroplast. Functionally, usually encoded in the trnK tRNA gene intron. Probably assists in splicing its own and other chloroplast group II introns. The sequence is that of Maturase K from Silene latifolia (White campion).